Consider the following 275-residue polypeptide: Light-independent protochlorophyllide reductase iron-sulfur ATP-binding protein (275 aa).

ATP is bound by residues 12 to 17 (GIGKST) and Lys-41. Residue Ser-16 coordinates Mg(2+). The [4Fe-4S] cluster site is built by Cys-97 and Cys-131. Residue 182–183 (NR) participates in ATP binding.

The protein belongs to the NifH/BchL/ChlL family. Homodimer. Protochlorophyllide reductase is composed of three subunits; BchL, BchN and BchB. The cofactor is [4Fe-4S] cluster.

The enzyme catalyses chlorophyllide a + oxidized 2[4Fe-4S]-[ferredoxin] + 2 ADP + 2 phosphate = protochlorophyllide a + reduced 2[4Fe-4S]-[ferredoxin] + 2 ATP + 2 H2O. It participates in porphyrin-containing compound metabolism; bacteriochlorophyll biosynthesis (light-independent). Its function is as follows. Component of the dark-operative protochlorophyllide reductase (DPOR) that uses Mg-ATP and reduced ferredoxin to reduce ring D of protochlorophyllide (Pchlide) to form chlorophyllide a (Chlide). This reaction is light-independent. The L component serves as a unique electron donor to the NB-component of the complex, and binds Mg-ATP. The sequence is that of Light-independent protochlorophyllide reductase iron-sulfur ATP-binding protein from Chlorobium phaeobacteroides (strain BS1).